We begin with the raw amino-acid sequence, 234 residues long: MNNEWLNAYVLHRRPYRETSYIVDFFSLEEGRISAVAKGVKNSKSDKKSLLQPFQHLRLQLSGKSDLKNLRHVESVAPSISLTGTALFCAMYVNELTNRIMPQGLASDGVYSAYEAALLALRDEADIEVTLRQLEFALLDEMGLLPDFTSDVEYEMPIEENGRYHFQLDAGFIQIPDDVVGARGIPGTALLSLSQGEFTPLSKKVAKVLCRDLLKPLIGDKPLKSRELFMTKPR.

The protein belongs to the RecO family.

Involved in DNA repair and RecF pathway recombination. The protein is DNA repair protein RecO of Alteromonas mediterranea (strain DSM 17117 / CIP 110805 / LMG 28347 / Deep ecotype).